Reading from the N-terminus, the 313-residue chain is Ribose-phosphate pyrophosphokinase (313 aa).

Residues 37-39 (DGE) and 96-97 (RQ) each bind ATP. H131 and D170 together coordinate Mg(2+). The active site involves K193. D-ribose 5-phosphate contacts are provided by residues R195, D219, and 223–227 (DTAGT).

Belongs to the ribose-phosphate pyrophosphokinase family. Class I subfamily. Homohexamer. Requires Mg(2+) as cofactor.

It localises to the cytoplasm. The enzyme catalyses D-ribose 5-phosphate + ATP = 5-phospho-alpha-D-ribose 1-diphosphate + AMP + H(+). It participates in metabolic intermediate biosynthesis; 5-phospho-alpha-D-ribose 1-diphosphate biosynthesis; 5-phospho-alpha-D-ribose 1-diphosphate from D-ribose 5-phosphate (route I): step 1/1. Its function is as follows. Involved in the biosynthesis of the central metabolite phospho-alpha-D-ribosyl-1-pyrophosphate (PRPP) via the transfer of pyrophosphoryl group from ATP to 1-hydroxyl of ribose-5-phosphate (Rib-5-P). In Pseudomonas aeruginosa (strain ATCC 15692 / DSM 22644 / CIP 104116 / JCM 14847 / LMG 12228 / 1C / PRS 101 / PAO1), this protein is Ribose-phosphate pyrophosphokinase.